The primary structure comprises 118 residues: MPTRVNDGVDADEVTFVNRFTVHGGPAEFESVFARTAAFFARQPGFVRHTLLRERDKDNSYVNIAVWTDHDAFRRALAQPGFLPHATALRALSTSEHGLFTARQTLPEGGDTTGSGHR.

The region spanning 14–100 is the ABM domain; the sequence is VTFVNRFTVH…ALSTSEHGLF (87 aa).

Homodimer.

The enzyme catalyses deoxynogalonate + O2 = nogalonate + H2O + H(+). The protein operates within antibiotic biosynthesis. Involved in the biosynthesis of the anthracycline (aromatic polyketide) antibiotic nogalamycin. Catalyzes the oxygenation of 12-deoxy-nogalonic acid at position 12 to yield nogalonic acid. This Streptomyces nogalater protein is Deoxynogalonate monooxygenase.